We begin with the raw amino-acid sequence, 93 residues long: MICAVYKSRLKPDSYLFVEKRNDFERVPEPLMKMFGTPELVMLLPLNKREQLALADIEKVKVELAEKGYYLQLPPPPVNLLEEYKKEIGYSRD.

A YcgL domain is found at 1 to 85; the sequence is MICAVYKSRL…PPVNLLEEYK (85 aa).

This Shewanella loihica (strain ATCC BAA-1088 / PV-4) protein is YcgL domain-containing protein Shew_2183.